The following is a 240-amino-acid chain: Tetraspanin-1 (240 aa).

Residues 1–9 lie on the Cytoplasmic side of the membrane; that stretch reads MQCFSFIKT. A helical membrane pass occupies residues 10–30; that stretch reads IMILFNLLIFLCGAALLAVGI. Over 31–52 the chain is Extracellular; it reads WVSIDGASFLKIFGPLSSSAMQ. Residues 53-73 traverse the membrane as a helical segment; that stretch reads FVNVGYFLIAAGAVVFALGFL. Topologically, residues 74-88 are cytoplasmic; sequence GCYGAQTESKCALMT. A helical transmembrane segment spans residues 89–109; that stretch reads FFFILLLIFIAEVAAAVVALV. At 110 to 210 the chain is on the extracellular side; it reads YTTMAEHFLT…QQLLYDIRTN (101 aa). A glycan (N-linked (GlcNAc...) asparagine) is linked at N154. The chain crosses the membrane as a helical span at residues 211–231; that stretch reads AVTVGGVAAGIGGLELAAMIV. Topologically, residues 232-240 are cytoplasmic; the sequence is SMYLYCNLQ.

It belongs to the tetraspanin (TM4SF) family. As to quaternary structure, interacts with SLC19A2. Interacts with NTRK1/TRKA.

It localises to the lysosome membrane. In terms of biological role, structural component of specialized membrane microdomains known as tetraspanin-enriched microdomains (TERMs), which act as platforms for receptor clustering and signaling. Participates thereby in diverse biological functions such as cell signal transduction, adhesion, migration and protein trafficking. Regulates neuronal differentiation in response to NGF by facilitating NGF-mediated activation of NTRK1/TRKA receptor tyrosine kinase and subsequent downstream signaling pathways. Plays a role in the inhibition of TNFalpha-induced apoptosis. Mechanistically, inhibits the NF-kappa-B signaling pathway by blocking phosphorylation of CHUK. Also promotes the stability of the thiamine transporter 1/SLC19A2 in intestinal epithelial cells leading to an increase of thiamine uptake process. The polypeptide is Tetraspanin-1 (TSPAN1) (Macaca fascicularis (Crab-eating macaque)).